The following is a 373-amino-acid chain: Homoserine O-acetyltransferase (373 aa).

The AB hydrolase-1 domain maps to 46-355; that stretch reads NAILICHPLT…NPNGHDSFLL (310 aa). The active-site Nucleophile is serine 151. Residue arginine 221 coordinates substrate. Active-site residues include aspartate 317 and histidine 350. Aspartate 351 lines the substrate pocket.

It belongs to the AB hydrolase superfamily. MetX family. Homodimer.

The protein resides in the cytoplasm. The enzyme catalyses L-homoserine + acetyl-CoA = O-acetyl-L-homoserine + CoA. It participates in amino-acid biosynthesis; L-methionine biosynthesis via de novo pathway; O-acetyl-L-homoserine from L-homoserine: step 1/1. Its function is as follows. Transfers an acetyl group from acetyl-CoA to L-homoserine, forming acetyl-L-homoserine. This chain is Homoserine O-acetyltransferase, found in Zymomonas mobilis subsp. mobilis (strain ATCC 31821 / ZM4 / CP4).